The chain runs to 204 residues: Small heat shock protein, chloroplastic (204 aa).

Residues 34–55 are disordered; that stretch reads QMGRVDHDHELDDRSNRAPISR. Basic and acidic residues predominate over residues 37-49; the sequence is RVDHDHELDDRSN. One can recognise a sHSP domain in the interval 98–204; that stretch reads GSGRAMRRGW…KKDVFQVMVD (107 aa).

This sequence belongs to the small heat shock protein (HSP20) family.

It is found in the plastid. The protein resides in the chloroplast stroma. This chain is Small heat shock protein, chloroplastic (HSP23), found in Oxybasis rubra (Red goosefoot).